A 533-amino-acid polypeptide reads, in one-letter code: L-aspartate oxidase (533 aa).

FAD is bound by residues 16–19 (SGAA), K38, 45–52 (ATFYAQGG), and D223. R290 (proton donor/acceptor) is an active-site residue. Residues E375 and 391 to 392 (SL) each bind FAD.

The protein belongs to the FAD-dependent oxidoreductase 2 family. NadB subfamily. The cofactor is FAD.

It localises to the cytoplasm. The catalysed reaction is L-aspartate + O2 = iminosuccinate + H2O2. It functions in the pathway cofactor biosynthesis; NAD(+) biosynthesis; iminoaspartate from L-aspartate (oxidase route): step 1/1. In terms of biological role, catalyzes the oxidation of L-aspartate to iminoaspartate, the first step in the de novo biosynthesis of NAD(+). The polypeptide is L-aspartate oxidase (nadB) (Yersinia pestis).